We begin with the raw amino-acid sequence, 546 residues long: Putative inactive G-type lectin S-receptor-like serine/threonine-protein kinase SRK (546 aa).

The signal sequence occupies residues 1–31 (MRGELPNKHHSYTFFVFLFFFLILFPDLSIS). Topologically, residues 32 to 441 (VNTLSATESL…FGERRTIRGK (410 aa)) are extracellular. The region spanning 34–154 (TLSATESLTI…KINESDEFLW (121 aa)) is the Bulb-type lectin domain. Residues N46, N120, N147, and N243 are each glycosylated (N-linked (GlcNAc...) asparagine). The EGF-like; atypical domain occupies 293-329 (PKDTCDLYGICGPYAYCDMSTSPTCNCIKGFQPLSPQ). 4 cysteine pairs are disulfide-bonded: C297/C309, C303/C317, C378/C403, and C382/C388. Residues 348 to 428 (CGEDRFFRLM…DGQDLFVRLA (81 aa)) form the PAN domain. N-linked (GlcNAc...) asparagine glycosylation occurs at N387. The helical transmembrane segment at 442-462 (IIGLIIGISLMLVLSFIIYCF) threads the bilayer. Residues 463–546 (WKKKQKRARA…IVYKGRLLDG (84 aa)) are Cytoplasmic-facing. The region spanning 524-546 (FSDSNILGRGGFGIVYKGRLLDG) is the Protein kinase domain. 530–538 (LGRGGFGIV) contacts ATP.

The protein belongs to the protein kinase superfamily. Ser/Thr protein kinase family.

The protein localises to the cell membrane. In terms of biological role, truncated and inactivated form of SRK, the female specificity determinant of self-incompatibility when active. Most A.thaliana cultivars contain such an inactive form and thus, are self-fertiles. The protein is Putative inactive G-type lectin S-receptor-like serine/threonine-protein kinase SRK (PSEUDOSRKA) of Arabidopsis thaliana (Mouse-ear cress).